Consider the following 212-residue polypeptide: Ribosomal RNA small subunit methyltransferase G (212 aa).

S-adenosyl-L-methionine-binding positions include glycine 80, leucine 85, 131 to 132, and arginine 146; that span reads VE.

It belongs to the methyltransferase superfamily. RNA methyltransferase RsmG family.

Its subcellular location is the cytoplasm. The catalysed reaction is guanosine(527) in 16S rRNA + S-adenosyl-L-methionine = N(7)-methylguanosine(527) in 16S rRNA + S-adenosyl-L-homocysteine. Its function is as follows. Specifically methylates the N7 position of guanine in position 527 of 16S rRNA. The sequence is that of Ribosomal RNA small subunit methyltransferase G from Azoarcus sp. (strain BH72).